The primary structure comprises 670 residues: Transcription factor 4 (670 aa).

Residues 1–83 (MHHQQRMAAL…GTPYDHMTSR (83 aa)) form an essential for MYOD1 inhibition region. Disordered regions lie at residues 24–244 (AMFS…LGNS), 262–320 (LSYP…SQTG), 335–378 (HTNN…EGPL), 406–426 (PSTAVPGGHGDMHGIMGPSHN), 465–573 (SLLP…MANN), and 637–670 (KRREEEKVSSEPPPLSLAGPHPGMGDAANHMGQM). Residues 29–49 (PVSSGKNGPTSLASGHFTGSN) show a composition bias toward polar residues. A phosphoserine mark is found at Ser66, Ser87, and Ser92. 4 stretches are compositionally biased toward polar residues: residues 107–125 (GSYSSYGRENVQGCHQQSL), 136–154 (GTLSPTKPGSQYYQYSSNN), 205–215 (PAASTFPSSFF), and 265–305 (PSHS…TDSI). Residues 336–347 (TNNSFSSNPSTP) are compositionally biased toward low complexity. Polar residues predominate over residues 364–373 (NGGQASSSPN). Phosphoserine is present on Ser371. The leucine-zipper stretch occupies residues 378–399 (LHSLQSRIEDRLERLDDAIHVL). 2 stretches are compositionally biased toward low complexity: residues 466–479 (LLPNQVPVPQLPVQ) and 502–511 (GQSVSSGSSE). At Ser514 the chain carries Phosphoserine. Composition is skewed to basic and acidic residues over residues 526-542 (KSSEDKKLDDDKKDIKS) and 558-573 (PEQKAEREKERRMANN). The bHLH domain maps to 567–620 (ERRMANNARERLRVRDINEAFKELGRMVQLHLKSDKPQTKLLILHQAVAVILSL). Residues 622 to 645 (QQVRERNLNPKAACLKRREEEKVS) form a class A specific domain region.

Efficient DNA binding requires dimerization with another bHLH protein. Isoform 2 seems to form inactive heterodimers with MYOD1. Interacts with HIVEP2. Interacts with NEUROD2. Interacts with AGBL1. Interacts with BHLHA9. Expressed in the cerebral cortex, Purkinje and granule cell layers of the cerebellum, olfactory neuroepithelium, pyramidal cells of hippocampal layers CA1-CA4, and in the granular cells of the dentate gyrus.

Its subcellular location is the nucleus. Its function is as follows. Transcription factor that binds to the immunoglobulin enhancer Mu-E5/KE5-motif. Involved in the initiation of neuronal differentiation. Activates transcription by binding to the E box (5'-CANNTG-3'). Isoform 2 inhibits MYOD1 activation of the cardiac alpha-actin promoter. Binds to the E-box present in the somatostatin receptor 2 initiator element (SSTR2-INR) to activate transcription. May have a regulatory function in developmental processes as well as during neuronal plasticity. This chain is Transcription factor 4 (Tcf4), found in Mus musculus (Mouse).